The sequence spans 132 residues: Small ribosomal subunit protein uS8 (132 aa).

Belongs to the universal ribosomal protein uS8 family. Part of the 30S ribosomal subunit. Contacts proteins S5 and S12.

Functionally, one of the primary rRNA binding proteins, it binds directly to 16S rRNA central domain where it helps coordinate assembly of the platform of the 30S subunit. In Rhodopseudomonas palustris (strain HaA2), this protein is Small ribosomal subunit protein uS8.